A 110-amino-acid chain; its full sequence is Large ribosomal subunit protein uL22 (110 aa).

Belongs to the universal ribosomal protein uL22 family. Part of the 50S ribosomal subunit.

This protein binds specifically to 23S rRNA; its binding is stimulated by other ribosomal proteins, e.g. L4, L17, and L20. It is important during the early stages of 50S assembly. It makes multiple contacts with different domains of the 23S rRNA in the assembled 50S subunit and ribosome. Functionally, the globular domain of the protein is located near the polypeptide exit tunnel on the outside of the subunit, while an extended beta-hairpin is found that lines the wall of the exit tunnel in the center of the 70S ribosome. The chain is Large ribosomal subunit protein uL22 from Syntrophotalea carbinolica (strain DSM 2380 / NBRC 103641 / GraBd1) (Pelobacter carbinolicus).